The chain runs to 134 residues: MKLAVVFLLTTVVFTLAQSQCENCADLQCNSTVHCCLVSTVRLPRWKREISRCGRLAIRRWRCEEPNSNGIYNRNCPCVPGLECREFRRGRRICLPEQSSTSTSSTQGPITSSTVTTQSEATTETETTTAAEGK.

The signal sequence occupies residues 1 to 19 (MKLAVVFLLTTVVFTLAQS). Intrachain disulfides connect cysteine 24-cysteine 35, cysteine 29-cysteine 53, and cysteine 63-cysteine 84. A disordered region spans residues 97-134 (EQSSTSTSSTQGPITSSTVTTQSEATTETETTTAAEGK). Residues 99-134 (SSTSTSSTQGPITSSTVTTQSEATTETETTTAAEGK) show a composition bias toward low complexity.

Belongs to the neurotoxin 32 family. Expressed by the venom gland.

It localises to the secreted. The polypeptide is U34-theraphotoxin-Cg1a (Chilobrachys guangxiensis (Chinese earth tiger tarantula)).